We begin with the raw amino-acid sequence, 482 residues long: Cytochrome P450 monooxygenase pynD (482 aa).

Residues 1-22 form the signal peptide; it reads MWRIPVIVALVAGLLYWVRKQG. N-linked (GlcNAc...) asparagine glycosylation occurs at N401. C417 lines the heme pocket.

The protein belongs to the cytochrome P450 family. Heme serves as cofactor.

It participates in secondary metabolite biosynthesis. Its function is as follows. Cytochrome P450 monooxygenase; part of the gene cluster that mediates the biosynthesis of pyranonigrins, a family of antioxidative compounds. The first step of pyranonigrins biosynthesis is performed by the hybrid PKS-NRPS synthetase that condenses 6 malonyl-CoA units to an acetyl starter unit, to form a 1,3,5-trioxotetradecane-6,8-dienyl-ACP. The enoyl reductase (ER) domain of pynA is likely to be functional during the first two rounds of polyketide chain extension, to generate the saturated C-C bonds of the alkyl side chain. PynA subsequently forms the amide bond between the acyl chain and L-serine. Although pynA has a terminal reductase domain, it appears to require the thioesterase pynI for the release of the straight-chain intermediate from pynA via the formation of a tetramic acid pyranonigrin J. The methyltransferase pynC then coverts pyranonigrin J to pyranonigrin I via N-methylation. The FAD-dependent monooxygenase pynG catalyzes an epoxidation-mediated cyclization to form the dihydro-gamma-pyrone moiety, followed by pynD-catalyzed oxidation of the alcohol to the ketone and enolization to yield the characteristic tetramic acid-fused gamma-pyrone core of pyranonigrin H. Pyranonigrin H is substrate of pynH for dehydration-mediated exo-methylene formation from the serine side chain to produce pyranonigrin E, before the oxidase pynE reduces the exo-methylene of pyranonigrin E into a pendant methyl to form pyranonigrin G. The FAD-linked oxidoreductase pynB performs the reverse reaction and converts pyranonigrin G back to pyranonigrin E. This Aspergillus niger (strain ATCC MYA-4892 / CBS 513.88 / FGSC A1513) protein is Cytochrome P450 monooxygenase pynD.